The primary structure comprises 455 residues: Bifunctional protein GlmU (455 aa).

Residues 1–228 (MNNTLTTIIL…EFEIEGVNNR (228 aa)) form a pyrophosphorylase region. Residues 10-13 (LAAG), Lys-24, Gln-75, 80-81 (GT), 102-104 (YGD), Gly-138, Glu-153, Asn-168, and Asn-226 contribute to the UDP-N-acetyl-alpha-D-glucosamine site. Position 104 (Asp-104) interacts with Mg(2+). Asn-226 lines the Mg(2+) pocket. Residues 229-249 (QQLAQLERKWQAKLVEDLQVQ) form a linker region. The interval 250–455 (GVQFADPNRV…DNYQRPEKKK (206 aa)) is N-acetyltransferase. Arg-332 and Lys-350 together coordinate UDP-N-acetyl-alpha-D-glucosamine. The active-site Proton acceptor is the His-362. Tyr-365 and Asn-376 together coordinate UDP-N-acetyl-alpha-D-glucosamine. Acetyl-CoA-binding positions include Ala-379, 385–386 (NY), Ala-422, and Arg-439.

The protein in the N-terminal section; belongs to the N-acetylglucosamine-1-phosphate uridyltransferase family. It in the C-terminal section; belongs to the transferase hexapeptide repeat family. In terms of assembly, homotrimer. The cofactor is Mg(2+).

It localises to the cytoplasm. The catalysed reaction is alpha-D-glucosamine 1-phosphate + acetyl-CoA = N-acetyl-alpha-D-glucosamine 1-phosphate + CoA + H(+). It catalyses the reaction N-acetyl-alpha-D-glucosamine 1-phosphate + UTP + H(+) = UDP-N-acetyl-alpha-D-glucosamine + diphosphate. It participates in nucleotide-sugar biosynthesis; UDP-N-acetyl-alpha-D-glucosamine biosynthesis; N-acetyl-alpha-D-glucosamine 1-phosphate from alpha-D-glucosamine 6-phosphate (route II): step 2/2. The protein operates within nucleotide-sugar biosynthesis; UDP-N-acetyl-alpha-D-glucosamine biosynthesis; UDP-N-acetyl-alpha-D-glucosamine from N-acetyl-alpha-D-glucosamine 1-phosphate: step 1/1. It functions in the pathway bacterial outer membrane biogenesis; LPS lipid A biosynthesis. In terms of biological role, catalyzes the last two sequential reactions in the de novo biosynthetic pathway for UDP-N-acetylglucosamine (UDP-GlcNAc). The C-terminal domain catalyzes the transfer of acetyl group from acetyl coenzyme A to glucosamine-1-phosphate (GlcN-1-P) to produce N-acetylglucosamine-1-phosphate (GlcNAc-1-P), which is converted into UDP-GlcNAc by the transfer of uridine 5-monophosphate (from uridine 5-triphosphate), a reaction catalyzed by the N-terminal domain. The polypeptide is Bifunctional protein GlmU (Psychrobacter sp. (strain PRwf-1)).